The sequence spans 84 residues: Small nuclear ribonucleoprotein E (84 aa).

The 72-residue stretch at 13-84 (INFIFKLLQQ…GDNITLIQAI (72 aa)) folds into the Sm domain.

It belongs to the snRNP Sm proteins family. In terms of assembly, component of the Sm core complex, present in spliceosomal snRNP U1, U2, U4/U6 and U5. The core complex contains smb1, smd1, smd2, smd3, sme1, smf1 and smg1 (Sm proteins B, D1, D2, D3, E, F and G, respectively), and is probably a heptameric ring structure.

The protein localises to the cytoplasm. It localises to the nucleus. Its function is as follows. Involved in pre-mRNA splicing. Binds and is required for the stability of snRNA U1, U2, U4 and U5 which contain a highly conserved structural motif called the Sm binding site. Involved in cap modification. This is Small nuclear ribonucleoprotein E from Schizosaccharomyces pombe (strain 972 / ATCC 24843) (Fission yeast).